A 120-amino-acid polypeptide reads, in one-letter code: cAMP-responsive element-binding protein-like 2 (120 aa).

Residues 1–24 (MDDSKVVGGKVKKPGKRGRKPAKI) form a disordered region. A compositionally biased stretch (basic residues) spans 10–21 (KVKKPGKRGRKP). In terms of domain architecture, bZIP spans 23–86 (KIDLKAKLER…MAMDQGKIPS (64 aa)). Residues 29 to 60 (KLERSRQSARECRARKKLRYQYLEELVSSRER) form a basic motif region. Residues 62 to 69 (ICALREEL) are leucine-zipper. The tract at residues 93–120 (TGEEQNKSQQNSSRHTKAGKTDANSNSW) is disordered.

Belongs to the bZIP family. ATF subfamily. As to quaternary structure, interacts with CREB1; regulates CREB1 phosphorylation, stability and transcriptional activity. Phosphorylated by AMPK.

It is found in the nucleus. Functionally, probable regulator of CREB1 transcriptional activity which is involved in adipose cells differentiation. May also play a regulatory role in the cell cycle. Identification in a chromosomal region frequently deleted in various cancers suggests that it might act as a tumor suppressor. In Homo sapiens (Human), this protein is cAMP-responsive element-binding protein-like 2 (CREBL2).